Consider the following 147-residue polypeptide: Prefoldin subunit alpha (147 aa).

This sequence belongs to the prefoldin alpha subunit family. Heterohexamer of two alpha and four beta subunits.

Its subcellular location is the cytoplasm. Functionally, molecular chaperone capable of stabilizing a range of proteins. Seems to fulfill an ATP-independent, HSP70-like function in archaeal de novo protein folding. This is Prefoldin subunit alpha from Thermococcus onnurineus (strain NA1).